The primary structure comprises 263 residues: Triosephosphate isomerase (263 aa).

10–12 is a substrate binding site; it reads NWK. Catalysis depends on His-104, which acts as the Electrophile. The active-site Proton acceptor is Glu-176. Substrate-binding positions include Gly-182, Ser-221, and 242–243; that span reads GG.

Belongs to the triosephosphate isomerase family. In terms of assembly, homodimer.

It localises to the cytoplasm. It carries out the reaction D-glyceraldehyde 3-phosphate = dihydroxyacetone phosphate. The protein operates within carbohydrate biosynthesis; gluconeogenesis. It participates in carbohydrate degradation; glycolysis; D-glyceraldehyde 3-phosphate from glycerone phosphate: step 1/1. Involved in the gluconeogenesis. Catalyzes stereospecifically the conversion of dihydroxyacetone phosphate (DHAP) to D-glyceraldehyde-3-phosphate (G3P). This chain is Triosephosphate isomerase, found in Haemophilus influenzae (strain ATCC 51907 / DSM 11121 / KW20 / Rd).